The primary structure comprises 518 residues: MDVNILTMFVTVSALALACSLWIASYLRNWRKKGVYPPVVGTMLNHAINFERLHDYHTDQAQRYKTFRVVYPTCSYVFTTDPVNVEHILKTNFANYDKGTFNYDIMKDLLGDGIFNVDGDKWRQQRKLASSEFASKVLKDFSSGVFCNNAAKLANILAQAAKLNLSVEMQDLFMRSSLDSICKVVFGIDINSLSSSKAESGPEASFAKAFDVANAMVFHRHMVGSFWKVQRFFNVGSEAILRDNIKMVDDFLYKVIHFRRQEMFSAEKENVRPDILSRYIIISDKETDGKVSDKYLRDVILNFMVAARDTTAIALSWFIYMLCKHQHVQEKLLEEIISSTSVHEDQYSTECNDIASFAQSLTDEALGKMHYLHASLSETLRLYPALPVDGKYVVNEDTLPDGFKVKKGDSVNFLPYAMGRMSYLWGDDAKEFKPERWIQDGIFHPKSPFKFPAFQAGPRTCLGKDFAYLQMKIVAAVLVRFFKFEAVKTKEVRYRTMLTLHMNEDGLNVQVTPRLNSD.

Transmembrane regions (helical) follow at residues 5-25 (ILTMFVTVSALALACSLWIAS) and 299-319 (VILNFMVAARDTTAIALSWFI). Cysteine 461 contributes to the heme binding site.

This sequence belongs to the cytochrome P450 family. Heme serves as cofactor.

The protein resides in the membrane. In Pinus taeda (Loblolly pine), this protein is Cytochrome P450 704C1 (CYP704C1).